The sequence spans 103 residues: Large ribosomal subunit protein uL24 (103 aa).

It belongs to the universal ribosomal protein uL24 family. Part of the 50S ribosomal subunit.

Its function is as follows. One of two assembly initiator proteins, it binds directly to the 5'-end of the 23S rRNA, where it nucleates assembly of the 50S subunit. One of the proteins that surrounds the polypeptide exit tunnel on the outside of the subunit. The chain is Large ribosomal subunit protein uL24 from Listeria innocua serovar 6a (strain ATCC BAA-680 / CLIP 11262).